The sequence spans 321 residues: Sialic acid-binding periplasmic protein SiaP (321 aa).

The signal sequence occupies residues 1–22 (MKTINKITIAILTLSAAASVNA).

Belongs to the bacterial solute-binding protein 7 family. In terms of assembly, the complex comprises the extracytoplasmic solute receptor protein SiaP, and the two transmembrane proteins SiaQ and SiaM.

The protein localises to the periplasm. In terms of biological role, part of the tripartite ATP-independent periplasmic (TRAP) transport system SiaPQM that catalyzes unidirectional Na(+)-dependent sialic acid uptake. Binds the common sialic acid N-acetylneuraminic acid (Neu5Ac) with a high affinity. This chain is Sialic acid-binding periplasmic protein SiaP, found in Vibrio cholerae serotype O1 (strain ATCC 39315 / El Tor Inaba N16961).